A 295-amino-acid polypeptide reads, in one-letter code: Alpha-ketoglutarate-dependent dioxygenase alkB homolog 3 (295 aa).

Residues 1 to 48 (MGDKRQRARVQGAWATPTKSQSAARPATPARSRPSQTPGPSWRSKEQQ) form a disordered region. Residues 22–35 (SAARPATPARSRPS) are compositionally biased toward low complexity. Substrate-binding positions include Trp-115 and 141-143 (YTY). The 107-residue stretch at 172-278 (TFNSLLCNFY…RVNLTFRTVY (107 aa)) folds into the Fe2OG dioxygenase domain. Leu-177 is subject to (4R)-5-hydroxyleucine; alternate. Position 177 is a (4R)-5-oxoleucine; alternate (Leu-177). 179-181 (NFY) serves as a coordination point for 2-oxoglutarate. Residues His-191 and Asp-193 each contribute to the Fe cation site. Asp-194 serves as a coordination point for substrate. Fe cation is bound at residue His-257. 2-oxoglutarate is bound by residues 269–275 (RVNLTFR) and Arg-275.

It belongs to the alkB family. Interacts with the ASCC complex composed of ASCC1, ASCC2 and ASCC3. Interacts directly with ASCC3, and is thereby recruited to the ASCC complex. Interacts with OTUD4; the interaction is direct. Interacts with USP7 and USP9X. Requires Fe(2+) as cofactor. Ubiquitinated; undergoes 'Lys-48'-linked polyubiquitination. OTUD4 promotes USP7 and USP9X-dependent deubiquitination of 'Lys-48'-polyubiquitinated ALKBH3 promoting the repair of alkylated DNA lesions.

The protein resides in the nucleus. It localises to the cytoplasm. It catalyses the reaction an N(1)-methyladenosine in mRNA + 2-oxoglutarate + O2 = an adenosine in mRNA + formaldehyde + succinate + CO2. The catalysed reaction is a methylated nucleobase within DNA + 2-oxoglutarate + O2 = a nucleobase within DNA + formaldehyde + succinate + CO2. It carries out the reaction an N(1)-methyl-2'-deoxyadenosine in single-stranded DNA + 2-oxoglutarate + O2 = a 2'-deoxyadenosine in single-stranded DNA + formaldehyde + succinate + CO2 + H(+). The enzyme catalyses an N(3)-methyl-2'-deoxycytidine in single-stranded DNA + 2-oxoglutarate + O2 = a 2'-deoxycytidine in single-stranded DNA + formaldehyde + succinate + CO2 + H(+). It catalyses the reaction a 3,N(4)-etheno-2'-deoxycytidine in single-stranded DNA + 2-oxoglutarate + O2 + H2O = a 2'-deoxycytidine in single-stranded DNA + glyoxal + succinate + CO2. Activated by ascorbate. Its function is as follows. Dioxygenase that mediates demethylation of DNA and RNA containing 1-methyladenosine (m1A). Repairs alkylated DNA containing 1-methyladenosine (m1A) and 3-methylcytosine (m3C) by oxidative demethylation. Has a strong preference for single-stranded DNA. Able to process alkylated m3C within double-stranded regions via its interaction with ASCC3, which promotes DNA unwinding to generate single-stranded substrate needed for ALKBH3. Can repair exocyclic 3,N4-ethenocytosine adducs in single-stranded DNA. Also acts on RNA. Demethylates N(1)-methyladenosine (m1A) RNA, an epigenetic internal modification of messenger RNAs (mRNAs) highly enriched within 5'-untranslated regions (UTRs) and in the vicinity of start codons. Requires molecular oxygen, alpha-ketoglutarate and iron. The sequence is that of Alpha-ketoglutarate-dependent dioxygenase alkB homolog 3 from Rattus norvegicus (Rat).